Consider the following 438-residue polypeptide: MPKIVVVGAVAGGATCASQIRRLDKESDIIIFEKDRDMSFANCALPYVIGEVVEDRRYALAYTPEEFYDRKQITVKTYHEVIAINDERQTVSVLNRKTNEQFEESYDKLILSPGASANSLGFESDITFTLRNLEDTDAIDQFIKANQVDKVLVVGAGYVSLEVLENLYERGLHPTLIHRSDKINKLMDADMNQPILDELDKREIPYRLNEEINAINGNEITFKSGKVEHYDMIIEGVGTHPNSKFIESSNIKLDRKGFIPVNDKFETNVPNIYAIGDIATSHYRHVDLPASVPLAWGAHRAASIVAEQIAGNDTIEFKGFLGNNIVKFFDYTFASVGVKPNELKQFDYKMVEVTQGAHANYYPGNSPLHLRVYYDTSNRQILRAAAVGKEGADKRIDVLSMAMMNQLTVDELTEFEVAYAPPYSHPKDLINMIGYKAK.

8–33 lines the FAD pocket; the sequence is GAVAGGATCASQIRRLDKESDIIIFE. Positions 15, 19, 22, 39, and 42 each coordinate substrate. The active-site Nucleophile is the cysteine 43. Residue cysteine 43 is the Redox-active of the active site. Lysine 71 lines the substrate pocket. An NADP(+)-binding site is contributed by 151-166; that stretch reads VLVVGAGYVSLEVLEN. 267–277 provides a ligand contact to FAD; it reads TNVPNIYAIGD. A substrate-binding site is contributed by histidine 299. Position 419 (tyrosine 419) interacts with FAD. Lysine 427 provides a ligand contact to substrate.

The protein belongs to the class-III pyridine nucleotide-disulfide oxidoreductase family. Homodimer. It depends on FAD as a cofactor.

The catalysed reaction is NADP(+) + 2 CoA = CoA-disulfide + NADPH + H(+). Functionally, catalyzes specifically the NADPH-dependent reduction of coenzyme A disulfide. This chain is Coenzyme A disulfide reductase, found in Staphylococcus aureus (strain COL).